A 484-amino-acid chain; its full sequence is Cholesterol 22-hydroxylase CYP90B27 (484 aa).

A helical membrane pass occupies residues alanine 2–phenylalanine 22. Cysteine 429 serves as a coordination point for heme.

The protein belongs to the cytochrome P450 family. As to expression, expressed in roots.

It localises to the membrane. It carries out the reaction cholesterol + reduced [NADPH--hemoprotein reductase] + O2 = (22R)-hydroxycholesterol + oxidized [NADPH--hemoprotein reductase] + H2O + H(+). Its pathway is steroid metabolism; cholesterol metabolism. Involved in the biosynthesis of steroidal saponins and alkaloids natural products from cholesterol such as spirostane-type saponins and polyphyllins, compounds with pharmacological activity. Catalyzes the C-22 hydroxylation of cholesterol to form 22R-hydroxycholesterol. The sequence is that of Cholesterol 22-hydroxylase CYP90B27 from Paris polyphylla (Daiswa polyphylla).